The chain runs to 58 residues: Large ribosomal subunit protein bL32c (58 aa).

The segment at 1–23 is disordered; sequence MAVPKKRTSKAKKNARKSVWKKK.

The protein belongs to the bacterial ribosomal protein bL32 family.

The protein localises to the plastid. It is found in the chloroplast. This is Large ribosomal subunit protein bL32c (rpl32-A) from Trieres chinensis (Marine centric diatom).